The following is a 269-amino-acid chain: Subtilisin Savinase (269 aa).

A Ca(2+)-binding site is contributed by Gln-2. A Peptidase S8 domain is found at Pro-5–Thr-268. The active-site Charge relay system is the Asp-32. Ca(2+) is bound at residue Asp-40. His-62 serves as the catalytic Charge relay system. 7 residues coordinate Ca(2+): Leu-73, Asn-75, Ile-77, Val-79, Ala-163, Tyr-165, and Ala-168. The Charge relay system role is filled by Ser-215.

Belongs to the peptidase S8 family. Ca(2+) is required as a cofactor.

It localises to the secreted. It carries out the reaction Hydrolysis of proteins with broad specificity for peptide bonds, and a preference for a large uncharged residue in P1. Hydrolyzes peptide amides.. In terms of biological role, subtilisin is an extracellular alkaline serine protease, it catalyzes the hydrolysis of proteins and peptide amides. The polypeptide is Subtilisin Savinase (Lederbergia lenta (Bacillus lentus)).